The sequence spans 118 residues: NADH-quinone oxidoreductase subunit A 1 (118 aa).

Helical transmembrane passes span 1 to 21 (MLGV…FGLA), 60 to 80 (FYII…MYPW), and 87 to 107 (LGIF…VGYI).

This sequence belongs to the complex I subunit 3 family. As to quaternary structure, NDH-1 is composed of 14 different subunits. Subunits NuoA, H, J, K, L, M, N constitute the membrane sector of the complex.

It localises to the cell inner membrane. The enzyme catalyses a quinone + NADH + 5 H(+)(in) = a quinol + NAD(+) + 4 H(+)(out). Functionally, NDH-1 shuttles electrons from NADH, via FMN and iron-sulfur (Fe-S) centers, to quinones in the respiratory chain. The immediate electron acceptor for the enzyme in this species is believed to be ubiquinone. Couples the redox reaction to proton translocation (for every two electrons transferred, four hydrogen ions are translocated across the cytoplasmic membrane), and thus conserves the redox energy in a proton gradient. In Geobacter sulfurreducens (strain ATCC 51573 / DSM 12127 / PCA), this protein is NADH-quinone oxidoreductase subunit A 1.